The primary structure comprises 300 residues: MGEASESMKKISRGRLGGSWMGEPSDHHRHGDEQEEEEKTLELSLGLPGGGWRAACRDKGTTTKHSIAAAAAADDDDGDKSSMLSLGYSTLVSHSQGKANKNKGSPEEEEAHPPPATGNNALASNNNGCFQTRSPSTPVVGWPPVRTFRRNLATSSKASLELQNGKKAAKAEEIKRAPFIKINMDGVPIGRKIDLNAFDSYEKLSLAVDKLFRGLLAAQRDPLTAGAKDCQQEDVAISGLLDGTGEYTLVYEDYEGDKVLVGDVPWGMFVSSVKRLRVLKTSDLSSSLITSGRKRTAAEC.

Disordered stretches follow at residues 1-80 (MGEA…DGDK) and 92-125 (VSHSQGKANKNKGSPEEEEAHPPPATGNNALASN). Residues 43–47 (LSLGL) carry the EAR-like (transcriptional repression) motif. The segment covering 92–103 (VSHSQGKANKNK) has biased composition (polar residues). One can recognise a PB1 domain in the interval 177–281 (APFIKINMDG…SVKRLRVLKT (105 aa)).

The protein belongs to the Aux/IAA family. In terms of assembly, homodimers and heterodimers. In terms of tissue distribution, expressed at low levels in roots and shoots.

It localises to the nucleus. Its function is as follows. Aux/IAA proteins are short-lived transcriptional factors that function as repressors of early auxin response genes at low auxin concentrations. The polypeptide is Auxin-responsive protein IAA7 (IAA7) (Oryza sativa subsp. japonica (Rice)).